Consider the following 54-residue polypeptide: Lectin alpha-1 chain (54 aa).

The protein belongs to the leguminous lectin family. As to quaternary structure, tetramer of two alpha and two beta chains.

This is Lectin alpha-1 chain from Lathyrus hirsutus (Rough pea).